We begin with the raw amino-acid sequence, 229 residues long: 2,3-bisphosphoglycerate-dependent phosphoglycerate mutase 2 (229 aa).

Substrate contacts are provided by residues 12 to 19 (RHGESVAN), 25 to 26 (TG), Arg-65, 92 to 95 (ERHY), Lys-103, and 119 to 120 (RR). The active-site Tele-phosphohistidine intermediate is the His-13. Glu-92 serves as the catalytic Proton donor/acceptor.

It belongs to the phosphoglycerate mutase family. BPG-dependent PGAM subfamily.

It carries out the reaction (2R)-2-phosphoglycerate = (2R)-3-phosphoglycerate. The protein operates within carbohydrate degradation; glycolysis; pyruvate from D-glyceraldehyde 3-phosphate: step 3/5. In terms of biological role, catalyzes the interconversion of 2-phosphoglycerate and 3-phosphoglycerate. In Lactobacillus johnsonii (strain CNCM I-12250 / La1 / NCC 533), this protein is 2,3-bisphosphoglycerate-dependent phosphoglycerate mutase 2.